The sequence spans 83 residues: Large ribosomal subunit protein eL43 (83 aa).

Zn(2+) is bound by residues C38, C41, C56, and C59. The segment at 38 to 59 (CPVCGRRAVRRISTGIWQCKKC) adopts a C4-type zinc-finger fold.

Belongs to the eukaryotic ribosomal protein eL43 family. Putative zinc-binding subfamily. Part of the 50S ribosomal subunit. The cofactor is Zn(2+).

Functionally, binds to the 23S rRNA. The polypeptide is Large ribosomal subunit protein eL43 (Pyrococcus abyssi (strain GE5 / Orsay)).